The sequence spans 400 residues: MSDINFMVVDGSLADLVAELTAYIETLGCDELEANCQRALAAGEEPKVFELITQQLPLLNKSSEQQFESVWQLCLHVFSFSESFEWVDAVLKAISGHSNLPRSFNGPAAAGQAVVAVLASLFNMLSSSHDDAQLANTLLAALTTAEETGNLHLLAGQLKSDQTVTWINTWQIEADVRDQLIAKIYSALVQLDEPAKALALLVAAVGNTQTSTFPMTCKLVQQALKSDHVYDFGSILALEPVEDLKTTEQRLFELLTTVASGEVAKMQSLAAGDAKSLIEENDFDAESLLAKTRVIALANLAAESPEIEYSIIAKNLDVSLDTVELWVIDTIRAGLVEGRLSQTKQSFAVHRAQKSGPIAKADWEVISQKLDVWKKSINDVLHVVKQARENANAQKRKIAA.

The region spanning Leu180 to Lys354 is the PCI domain.

The protein belongs to the eIF-3 subunit M family. In terms of assembly, component of the eukaryotic translation initiation factor 3 (eIF-3) complex.

It is found in the cytoplasm. Its function is as follows. Component of the eukaryotic translation initiation factor 3 (eIF-3) complex, which is involved in protein synthesis of a specialized repertoire of mRNAs and, together with other initiation factors, stimulates binding of mRNA and methionyl-tRNAi to the 40S ribosome. The eIF-3 complex specifically targets and initiates translation of a subset of mRNAs involved in cell proliferation. This is Eukaryotic translation initiation factor 3 subunit M from Yarrowia lipolytica (strain CLIB 122 / E 150) (Yeast).